The sequence spans 741 residues: Pentatricopeptide repeat-containing protein At1g08070, chloroplastic (741 aa).

PPR repeat units lie at residues asparagine 98–proline 132, asparagine 133–leucine 167, aspartate 168–serine 202, tyrosine 203–lysine 229, aspartate 230–proline 264, aspartate 265–serine 299, asparagine 300–lysine 330, aspartate 331–proline 365, asparagine 366–arginine 396, alanine 403–lysine 433, serine 434–proline 468, aspartate 469–aspartate 499, and lysine 505–glutamate 535. The interval isoleucine 540–aspartate 615 is type E motif. Residues serine 616–glutamate 646 form a type E(+) motif region. The interval lysine 647–tryptophan 741 is type DYW motif.

Belongs to the PPR family. PCMP-H subfamily. As to quaternary structure, interacts with ORRM1. Interacts with VAR3/OZ1.

Its subcellular location is the plastid. The protein resides in the chloroplast. Involved in multiple sites RNA editing events in chloroplasts. Involved in the editing of the site 9 of ndhB (ndhB-9) and site 1 of ndhG (ndhG-1) transcripts, which are two plastid-encoded subunits of the chloroplast NAD(P)H dehydrogenase (NDH) complex. Not essential for the activity of the NDH complex of the photosynthetic electron transport chain. This chain is Pentatricopeptide repeat-containing protein At1g08070, chloroplastic (PCMP-H12), found in Arabidopsis thaliana (Mouse-ear cress).